Here is a 541-residue protein sequence, read N- to C-terminus: MDSKRSLLFMALLFISFLIYQQWQVDYNTPKPEVTEQAQVSEVNSTALTATSDIANDTQAKGRVITLENDVFRLKVNTLGGDVIGSELLNYDAELHSSAPFVLLQNNADKVYIAQSGLVGKNGIDSRAGRANYQVEGDVFKLAEGQQELKVPLIFEKDGVIYRKVFVLKPGSYALEVNFEITNQSPKPIELVPYAQLTHTLVESSGSMAMPTYTGGAYSSSETNYKKYSFEDMEKADLDIHTKAGWVALLQHYFVSAWIPNQDANNTLYTLTNTKKHLGSIGYRSAPIVIENGATETIHTQLWTGPKLQDQMADVANHLDLTVDYGWAWFIAKPLFKLLTLIQSLVQNWGLAIIGVTLVVKAVLYPLTKAQYTSMAKMRMLQPKLQEMRERFGEDRQRMSQEMMKLYKEEKVNPLGGCLPILLQMPIFIALYWTFMEAVELRHAPFFGWVQDLSAQDPYFILPILMGASMFLLQKMSPTPVADPMQQKVMTFMPLIFMVFFLFFPAGLVLYWLASNLITIAQQWLIYRGLEKKGLHTRVKK.

The next 5 membrane-spanning stretches (helical) occupy residues 7–27 (LLFM…QVDY), 345–365 (LVQN…AVLY), 415–435 (LGGC…YWTF), 453–473 (LSAQ…MFLL), and 492–512 (FMPL…VLYW).

This sequence belongs to the OXA1/ALB3/YidC family. Type 1 subfamily. In terms of assembly, interacts with the Sec translocase complex via SecD. Specifically interacts with transmembrane segments of nascent integral membrane proteins during membrane integration.

The protein localises to the cell inner membrane. Functionally, required for the insertion and/or proper folding and/or complex formation of integral membrane proteins into the membrane. Involved in integration of membrane proteins that insert both dependently and independently of the Sec translocase complex, as well as at least some lipoproteins. Aids folding of multispanning membrane proteins. In Histophilus somni (strain 2336) (Haemophilus somnus), this protein is Membrane protein insertase YidC.